Consider the following 247-residue polypeptide: Carboxy-S-adenosyl-L-methionine synthase (247 aa).

Residues Tyr-39, 64–66, 89–90, 117–118, Asn-132, and Arg-199 contribute to the S-adenosyl-L-methionine site; these read GCS, DN, and DI.

This sequence belongs to the class I-like SAM-binding methyltransferase superfamily. Cx-SAM synthase family. In terms of assembly, homodimer.

The catalysed reaction is prephenate + S-adenosyl-L-methionine = carboxy-S-adenosyl-L-methionine + 3-phenylpyruvate + H2O. Its function is as follows. Catalyzes the conversion of S-adenosyl-L-methionine (SAM) to carboxy-S-adenosyl-L-methionine (Cx-SAM). The chain is Carboxy-S-adenosyl-L-methionine synthase from Escherichia fergusonii (strain ATCC 35469 / DSM 13698 / CCUG 18766 / IAM 14443 / JCM 21226 / LMG 7866 / NBRC 102419 / NCTC 12128 / CDC 0568-73).